We begin with the raw amino-acid sequence, 253 residues long: Small ribosomal subunit protein uS2 (253 aa).

Belongs to the universal ribosomal protein uS2 family.

The protein is Small ribosomal subunit protein uS2 of Chlorobium luteolum (strain DSM 273 / BCRC 81028 / 2530) (Pelodictyon luteolum).